The following is an 851-amino-acid chain: Putative cell signaling protein (851 aa).

Composition is skewed to basic and acidic residues over residues 165-176 (KLNEQDGKKSDN), 196-223 (DQAREQGSKAKDKIKNDPDAQKAKEETK), and 767-781 (SEERQRSTEDPLSHD). Disordered stretches follow at residues 165–223 (KLNE…EETK) and 714–781 (DDSE…LSHD).

In terms of processing, palmitoylated.

This is Putative cell signaling protein from Schizosaccharomyces pombe (strain 972 / ATCC 24843) (Fission yeast).